Reading from the N-terminus, the 487-residue chain is Cytochrome c-552 (487 aa).

An N-terminal signal peptide occupies residues 1 to 27 (MSKKWTRNTAAMAAILSALCLSTNALA). A heme c-binding site is contributed by H104. The heme site is built by C132, C135, and K136. Heme c contacts are provided by C170, C173, H174, C219, C222, and H223. Residues E225, Y226, K271, and Q273 each contribute to the Ca(2+) site. Position 226 (Y226) interacts with substrate. Residue H274 coordinates substrate. Heme c is bound by residues H285, C292, C295, H296, H311, C324, C327, H328, and H403.

This sequence belongs to the cytochrome c-552 family. The cofactor is Ca(2+). Heme c is required as a cofactor.

It is found in the periplasm. The catalysed reaction is 6 Fe(III)-[cytochrome c] + NH4(+) + 2 H2O = 6 Fe(II)-[cytochrome c] + nitrite + 8 H(+). Its pathway is nitrogen metabolism; nitrate reduction (assimilation). Functionally, catalyzes the reduction of nitrite to ammonia, consuming six electrons in the process. This Photobacterium profundum (strain SS9) protein is Cytochrome c-552.